The sequence spans 776 residues: Probable E3 ubiquitin-protein ligase HECTD2 (776 aa).

The segment at 1 to 46 (MSEAVRVPSPATPLVVAAPAPEERKGKESEREKLPPIVSAGAGATA) is disordered. Residues 7 to 20 (VPSPATPLVVAAPA) show a composition bias toward low complexity. Serine 9 carries the phosphoserine modification. Positions 21–34 (PEERKGKESEREKL) are enriched in basic and acidic residues. One can recognise an HECT domain in the interval 437–776 (KRADLKKKLK…ISNSEGFGLE (340 aa)). Cysteine 744 (glycyl thioester intermediate) is an active-site residue.

The enzyme catalyses S-ubiquitinyl-[E2 ubiquitin-conjugating enzyme]-L-cysteine + [acceptor protein]-L-lysine = [E2 ubiquitin-conjugating enzyme]-L-cysteine + N(6)-ubiquitinyl-[acceptor protein]-L-lysine.. The protein operates within protein modification; protein ubiquitination. Functionally, E3 ubiquitin-protein ligase which accepts ubiquitin from an E2 ubiquitin-conjugating enzyme in the form of a thioester and then directly transfers the ubiquitin to targeted substrates. (Microbial infection) Catalyzes ubiquitination of Botulinum neurotoxin A light chain (LC) of C.botulinum neurotoxin type A (BoNT/A). The chain is Probable E3 ubiquitin-protein ligase HECTD2 from Homo sapiens (Human).